The primary structure comprises 1407 residues: DNA-directed RNA polymerase subunit beta' (1407 aa).

Residues Cys70, Cys72, Cys85, and Cys88 each coordinate Zn(2+). 3 residues coordinate Mg(2+): Asp460, Asp462, and Asp464. Residues Cys814, Cys888, Cys895, and Cys898 each coordinate Zn(2+).

Belongs to the RNA polymerase beta' chain family. As to quaternary structure, the RNAP catalytic core consists of 2 alpha, 1 beta, 1 beta' and 1 omega subunit. When a sigma factor is associated with the core the holoenzyme is formed, which can initiate transcription. Mg(2+) is required as a cofactor. It depends on Zn(2+) as a cofactor.

It catalyses the reaction RNA(n) + a ribonucleoside 5'-triphosphate = RNA(n+1) + diphosphate. DNA-dependent RNA polymerase catalyzes the transcription of DNA into RNA using the four ribonucleoside triphosphates as substrates. The chain is DNA-directed RNA polymerase subunit beta' from Salmonella arizonae (strain ATCC BAA-731 / CDC346-86 / RSK2980).